The chain runs to 353 residues: MIKTDILIIGAGPTGLFAVFEAGLLKLKCHLIDALPQPGGQCSEIYPKKPIYDIPGFPEVLAGDLVDNLMEQIKPFEPGFTLGERAETIDKQEDGSFIVTTSQGAKHHAPVVVIAGGLGSFEPRKPPIPSIKEYENKGVAYIIRDPEVYRDKKVVIAGGGDSALDWSIFLADVASEVSLVHRRKDFRGALDSVEKVEELSKIGKINLITDAEVVDLKGENELDSVLIRHRDQARGEELKDTDHFIPLFGLSPKLGPIANWGLEIEKNAIKVDNAYDYQTNIPGIYAIGDVNTYKGKLKLILCGFHEAAIMCQSAYQRINPDKKYVMKYTTVSGVSGFDGSKKEAKKEVVKSIN.

T14, D33, Q41, Y46, A86, F121, D289, and T330 together coordinate FAD.

Belongs to the ferredoxin--NADP reductase type 2 family. In terms of assembly, homodimer. FAD serves as cofactor.

It carries out the reaction 2 reduced [2Fe-2S]-[ferredoxin] + NADP(+) + H(+) = 2 oxidized [2Fe-2S]-[ferredoxin] + NADPH. The polypeptide is Ferredoxin--NADP reductase 1 (Christiangramia forsetii (strain DSM 17595 / CGMCC 1.15422 / KT0803) (Gramella forsetii)).